A 449-amino-acid polypeptide reads, in one-letter code: Protein translocase subunit SecD (449 aa).

Helical transmembrane passes span 6 to 26 (GLVFLAILAAMILAFTIVLPT), 272 to 292 (LAVKAGLVGIILVMIFMIAFY), 294 to 314 (LPGLLASIALVFYGVIVLALF), 317 to 337 (VPVTLTLAGIGGFIVSAGMAV), 379 to 399 (TFIACGILFWVGGTIAAGAPV), and 401 to 421 (GFAVTLFLGVAVSMFTAIFVT).

It belongs to the SecD/SecF family. SecD subfamily. As to quaternary structure, forms a complex with SecF. Part of the essential Sec protein translocation apparatus which comprises SecA, SecYEG and auxiliary proteins SecDF. Other proteins may also be involved.

It is found in the cell membrane. In terms of biological role, part of the Sec protein translocase complex. Interacts with the SecYEG preprotein conducting channel. SecDF uses the proton motive force (PMF) to complete protein translocation after the ATP-dependent function of SecA. This Dehalococcoides mccartyi (strain VS) protein is Protein translocase subunit SecD.